A 1036-amino-acid polypeptide reads, in one-letter code: Beta-galactosidase (1036 aa).

Substrate-binding residues include asparagine 97 and aspartate 197. Residue aspartate 197 participates in Na(+) binding. The Mg(2+) site is built by glutamate 411, histidine 413, and glutamate 456. Residues glutamate 456 and 532-535 contribute to the substrate site; that span reads EYAH. Glutamate 456 serves as the catalytic Proton donor. Glutamate 532 acts as the Nucleophile in catalysis. Residue asparagine 592 coordinates Mg(2+). Na(+) contacts are provided by phenylalanine 596 and aspartate 599. Substrate-binding residues include aspartate 599 and tryptophan 1006.

It belongs to the glycosyl hydrolase 2 family. As to quaternary structure, homotetramer. It depends on Mg(2+) as a cofactor. Na(+) serves as cofactor.

It carries out the reaction Hydrolysis of terminal non-reducing beta-D-galactose residues in beta-D-galactosides.. This chain is Beta-galactosidase, found in Leuconostoc mesenteroides subsp. mesenteroides (strain ATCC 8293 / DSM 20343 / BCRC 11652 / CCM 1803 / JCM 6124 / NCDO 523 / NBRC 100496 / NCIMB 8023 / NCTC 12954 / NRRL B-1118 / 37Y).